We begin with the raw amino-acid sequence, 258 residues long: Thiazole synthase (258 aa).

The active-site Schiff-base intermediate with DXP is the K98. 1-deoxy-D-xylulose 5-phosphate-binding positions include G159, 185–186, and 207–208; these read AG and NT.

It belongs to the ThiG family. Homotetramer. Forms heterodimers with either ThiH or ThiS.

Its subcellular location is the cytoplasm. It carries out the reaction [ThiS sulfur-carrier protein]-C-terminal-Gly-aminoethanethioate + 2-iminoacetate + 1-deoxy-D-xylulose 5-phosphate = [ThiS sulfur-carrier protein]-C-terminal Gly-Gly + 2-[(2R,5Z)-2-carboxy-4-methylthiazol-5(2H)-ylidene]ethyl phosphate + 2 H2O + H(+). Its pathway is cofactor biosynthesis; thiamine diphosphate biosynthesis. Functionally, catalyzes the rearrangement of 1-deoxy-D-xylulose 5-phosphate (DXP) to produce the thiazole phosphate moiety of thiamine. Sulfur is provided by the thiocarboxylate moiety of the carrier protein ThiS. In vitro, sulfur can be provided by H(2)S. This Bacillus cereus (strain ATCC 14579 / DSM 31 / CCUG 7414 / JCM 2152 / NBRC 15305 / NCIMB 9373 / NCTC 2599 / NRRL B-3711) protein is Thiazole synthase.